An 84-amino-acid chain; its full sequence is ATP synthase subunit c (84 aa).

Helical transmembrane passes span 13–33 (IAVG…WGLI) and 56–76 (FIFA…GFWF).

This sequence belongs to the ATPase C chain family. F-type ATPases have 2 components, F(1) - the catalytic core - and F(0) - the membrane proton channel. F(1) has five subunits: alpha(3), beta(3), gamma(1), delta(1), epsilon(1). F(0) has three main subunits: a(1), b(2) and c(10-14). The alpha and beta chains form an alternating ring which encloses part of the gamma chain. F(1) is attached to F(0) by a central stalk formed by the gamma and epsilon chains, while a peripheral stalk is formed by the delta and b chains.

It is found in the cell inner membrane. Its function is as follows. F(1)F(0) ATP synthase produces ATP from ADP in the presence of a proton or sodium gradient. F-type ATPases consist of two structural domains, F(1) containing the extramembraneous catalytic core and F(0) containing the membrane proton channel, linked together by a central stalk and a peripheral stalk. During catalysis, ATP synthesis in the catalytic domain of F(1) is coupled via a rotary mechanism of the central stalk subunits to proton translocation. Functionally, key component of the F(0) channel; it plays a direct role in translocation across the membrane. A homomeric c-ring of between 10-14 subunits forms the central stalk rotor element with the F(1) delta and epsilon subunits. This Acidithiobacillus ferrooxidans (strain ATCC 23270 / DSM 14882 / CIP 104768 / NCIMB 8455) (Ferrobacillus ferrooxidans (strain ATCC 23270)) protein is ATP synthase subunit c.